We begin with the raw amino-acid sequence, 858 residues long: Selenocysteine insertion sequence-binding protein 2 (858 aa).

3 disordered regions span residues Lys-127–Gly-261, Ser-275–Glu-296, and Leu-327–Thr-625. 3 stretches are compositionally biased toward basic and acidic residues: residues Lys-147–Asp-166, Ser-188–Lys-197, and Pro-215–Phe-224. 2 stretches are compositionally biased toward polar residues: residues Ala-281–Glu-296 and Leu-327–Tyr-352. Residues Lys-380–Lys-387 carry the Nuclear localization signal motif. The segment covering Arg-418–Ser-429 has biased composition (basic residues). Over residues Lys-430–Pro-447 the composition is skewed to polar residues. Positions Ile-539–Gln-548 are enriched in basic and acidic residues. Polar residues-rich tracts occupy residues Ser-554 to Asp-563 and Gly-571 to Pro-582. Residues Leu-678 to Ile-699 form an RNA-binding region. The disordered stretch occupies residues Met-785–Gly-819. A compositionally biased stretch (pro residues) spans Pro-795–Asp-805.

The protein resides in the cytoplasm. The protein localises to the nucleus. MRNA-binding protein that binds to the SECIS (selenocysteine insertion sequence) element present in the 3'-UTR of mRNAs encoding selenoproteins and facilitates the incorporation of the rare amino acid selenocysteine. Insertion of selenocysteine at UGA codons is mediated by SECISBP2 and EEFSEC: SECISBP2 (1) specifically binds the SECIS sequence once the 80S ribosome encounters an in-frame UGA codon and (2) contacts the RPS27A/eS31 of the 40S ribosome before ribosome stalling. (3) GTP-bound EEFSEC then delivers selenocysteinyl-tRNA(Sec) to the 80S ribosome and adopts a preaccommodated state conformation. (4) After GTP hydrolysis, EEFSEC dissociates from the assembly, selenocysteinyl-tRNA(Sec) accommodates, and peptide bond synthesis and selenoprotein elongation occur. The sequence is that of Selenocysteine insertion sequence-binding protein 2 from Mus musculus (Mouse).